A 490-amino-acid polypeptide reads, in one-letter code: Ribulose bisphosphate carboxylase large chain (490 aa).

Substrate-binding residues include N127 and T177. Catalysis depends on K179, which acts as the Proton acceptor. K181 is a substrate binding site. 3 residues coordinate Mg(2+): K205, D207, and E208. K205 carries the N6-carboxylysine modification. H297 (proton acceptor) is an active-site residue. The substrate site is built by R298, H330, and S382.

The protein belongs to the RuBisCO large chain family. Type I subfamily. Heterohexadecamer of 8 large chains and 8 small chains. The cofactor is Mg(2+).

The protein localises to the plastid. It is found in the chloroplast. The catalysed reaction is 2 (2R)-3-phosphoglycerate + 2 H(+) = D-ribulose 1,5-bisphosphate + CO2 + H2O. The enzyme catalyses D-ribulose 1,5-bisphosphate + O2 = 2-phosphoglycolate + (2R)-3-phosphoglycerate + 2 H(+). Functionally, ruBisCO catalyzes two reactions: the carboxylation of D-ribulose 1,5-bisphosphate, the primary event in carbon dioxide fixation, as well as the oxidative fragmentation of the pentose substrate in the photorespiration process. Both reactions occur simultaneously and in competition at the same active site. This is Ribulose bisphosphate carboxylase large chain from Thalassiosira pseudonana (Marine diatom).